Consider the following 144-residue polypeptide: 6-pyruvoyl tetrahydrobiopterin synthase (144 aa).

A propeptide spanning residues Met-1 to Ala-4 is cleaved from the precursor. The residue at position 18 (Ser-18) is a Phosphoserine. Position 23 (His-23) interacts with Zn(2+). Residue Ser-27 is modified to Phosphoserine. Cys-42 serves as the catalytic Proton acceptor. Zn(2+) is bound by residues His-48 and His-50. Residue His-89 is the Charge relay system of the active site. Position 127 is a phosphotyrosine (Tyr-127). Catalysis depends on Glu-133, which acts as the Charge relay system.

The protein belongs to the PTPS family. In terms of assembly, homohexamer formed of two homotrimers in a head to head fashion. Zn(2+) serves as cofactor. Phosphorylation of Ser-18 is required for maximal enzyme activity.

It catalyses the reaction 7,8-dihydroneopterin 3'-triphosphate = 6-pyruvoyl-5,6,7,8-tetrahydropterin + triphosphate + H(+). Its pathway is cofactor biosynthesis; tetrahydrobiopterin biosynthesis; tetrahydrobiopterin from 7,8-dihydroneopterin triphosphate: step 1/3. Its function is as follows. Involved in the biosynthesis of tetrahydrobiopterin, an essential cofactor of aromatic amino acid hydroxylases. Catalyzes the transformation of 7,8-dihydroneopterin triphosphate into 6-pyruvoyl tetrahydropterin. This chain is 6-pyruvoyl tetrahydrobiopterin synthase (Pts), found in Rattus norvegicus (Rat).